The primary structure comprises 133 residues: T-cell receptor beta chain V region 86T1 (133 aa).

The first 21 residues, 1–21, serve as a signal peptide directing secretion; sequence MSCRLLLYVSLCLVETALMNT. The segment at 22–113 is v segment; it reads KITQSPRYLI…SAVYFCASSH (92 aa). 2 N-linked (GlcNAc...) asparagine glycosylation sites follow: Asn36 and Asn75. Cys41 and Cys109 form a disulfide bridge. The tract at residues 114 to 133 is j segment; sequence GQGVSGNTLYFGEGSRLIVV.

This chain is T-cell receptor beta chain V region 86T1, found in Mus musculus (Mouse).